The primary structure comprises 61 residues: Large ribosomal subunit protein uL30 (61 aa).

This sequence belongs to the universal ribosomal protein uL30 family. As to quaternary structure, part of the 50S ribosomal subunit.

This Laribacter hongkongensis (strain HLHK9) protein is Large ribosomal subunit protein uL30.